A 205-amino-acid chain; its full sequence is LexA repressor (205 aa).

A DNA-binding region (H-T-H motif) is located at residues 28–48 (RAEIAHKLGFRSANSAEEHLK). Residues serine 122 and lysine 159 each act as for autocatalytic cleavage activity in the active site.

It belongs to the peptidase S24 family. As to quaternary structure, homodimer.

The catalysed reaction is Hydrolysis of Ala-|-Gly bond in repressor LexA.. Its function is as follows. Represses a number of genes involved in the response to DNA damage (SOS response), including recA and lexA. In the presence of single-stranded DNA, RecA interacts with LexA causing an autocatalytic cleavage which disrupts the DNA-binding part of LexA, leading to derepression of the SOS regulon and eventually DNA repair. In Idiomarina loihiensis (strain ATCC BAA-735 / DSM 15497 / L2-TR), this protein is LexA repressor.